A 76-amino-acid polypeptide reads, in one-letter code: Protein RALF-like 26 (76 aa).

The first 22 residues, 1–22 (MKAWMIILLVICVAVVVEQSEA), serve as a signal peptide directing secretion. Cys37 and Cys46 are disulfide-bonded. A glycan (N-linked (GlcNAc...) asparagine) is linked at Asn61. Residues Cys66 and Cys72 are joined by a disulfide bond.

Belongs to the plant rapid alkalinization factor (RALF) family.

Its subcellular location is the secreted. Functionally, cell signaling peptide that may regulate plant stress, growth, and development. Mediates a rapid alkalinization of extracellular space by mediating a transient increase in the cytoplasmic Ca(2+) concentration leading to a calcium-dependent signaling events through a cell surface receptor and a concomitant activation of some intracellular mitogen-activated protein kinases. This Arabidopsis thaliana (Mouse-ear cress) protein is Protein RALF-like 26 (RALFL26).